Consider the following 142-residue polypeptide: Large ribosomal subunit protein uL13 (142 aa).

Belongs to the universal ribosomal protein uL13 family. In terms of assembly, part of the 50S ribosomal subunit.

Functionally, this protein is one of the early assembly proteins of the 50S ribosomal subunit, although it is not seen to bind rRNA by itself. It is important during the early stages of 50S assembly. The sequence is that of Large ribosomal subunit protein uL13 from Shigella sonnei (strain Ss046).